The following is a 508-amino-acid chain: Lysine--tRNA ligase (508 aa).

Residues Glu-418 and Glu-425 each contribute to the Mg(2+) site.

Belongs to the class-II aminoacyl-tRNA synthetase family. Homodimer. Mg(2+) is required as a cofactor.

It is found in the cytoplasm. It carries out the reaction tRNA(Lys) + L-lysine + ATP = L-lysyl-tRNA(Lys) + AMP + diphosphate. The chain is Lysine--tRNA ligase from Burkholderia thailandensis (strain ATCC 700388 / DSM 13276 / CCUG 48851 / CIP 106301 / E264).